Consider the following 272-residue polypeptide: Bifunctional protein FolD (272 aa).

Residues 155–157, S182, and I223 contribute to the NADP(+) site; that span reads GRS.

The protein belongs to the tetrahydrofolate dehydrogenase/cyclohydrolase family. In terms of assembly, homodimer.

It carries out the reaction (6R)-5,10-methylene-5,6,7,8-tetrahydrofolate + NADP(+) = (6R)-5,10-methenyltetrahydrofolate + NADPH. The enzyme catalyses (6R)-5,10-methenyltetrahydrofolate + H2O = (6R)-10-formyltetrahydrofolate + H(+). Its pathway is one-carbon metabolism; tetrahydrofolate interconversion. Its function is as follows. Catalyzes the oxidation of 5,10-methylenetetrahydrofolate to 5,10-methenyltetrahydrofolate and then the hydrolysis of 5,10-methenyltetrahydrofolate to 10-formyltetrahydrofolate. In Fervidobacterium nodosum (strain ATCC 35602 / DSM 5306 / Rt17-B1), this protein is Bifunctional protein FolD.